A 79-amino-acid polypeptide reads, in one-letter code: Small ribosomal subunit protein bS16 (79 aa).

This sequence belongs to the bacterial ribosomal protein bS16 family.

The protein is Small ribosomal subunit protein bS16 of Solidesulfovibrio magneticus (strain ATCC 700980 / DSM 13731 / RS-1) (Desulfovibrio magneticus).